Consider the following 173-residue polypeptide: uncharacterized protein (173 aa).

This is an uncharacterized protein from Haemophilus influenzae (strain ATCC 51907 / DSM 11121 / KW20 / Rd).